Reading from the N-terminus, the 84-residue chain is U4-theraphotoxin-Hhn1aa (84 aa).

Positions 1-22 (MKVTLIAILTCAAVLVLHTTAA) are cleaved as a signal peptide. Positions 23–47 (EELEESQLMEVGMPDTELAAVDEER) are excised as a propeptide. 2 cysteine pairs are disulfide-bonded: C51-C65 and C55-C76.

It belongs to the neurotoxin 12 (Hwtx-2) family. 02 (Hwtx-2) subfamily. Expressed by the venom gland.

It localises to the secreted. Postsynaptic neurotoxin. The sequence is that of U4-theraphotoxin-Hhn1aa from Cyriopagopus hainanus (Chinese bird spider).